Consider the following 103-residue polypeptide: Hexon-interlacing protein (103 aa).

Positions 72-99 (LDELKIQVAAMQNSVTAIQREVNDLKQR) form a coiled coil.

The protein belongs to the adenoviridae hexon-interlacing protein family. Homotrimer. Interacts with hexon protein; this interaction tethers the hexons together. Self-interacts with adjacent proteins. Interacts with kinesin light chain KLC1; this interaction leads to capsid disruption at the nuclear pore complex during virus entry into host cell.

It localises to the virion. It is found in the host nucleus. Its function is as follows. Structural component of the virion that acts as a cement protein on the capsid exterior and forms triskelion structures consisting of three molecules that stabilize three hexon trimers at the center of each icosahedral facet and fixes the peripentonal hexons. Dispensable for assembly. During virus entry, recruits the anterograde motor kinesin-1 to the capsid docked at the nuclear pore complex thereby subjecting the docked capsid to a pulling force. The resulting tension leads to capsid disruption, dispersion of capsid fragments toward cell periphery and eventually viral DNA entry into the host nucleus. The sequence is that of Hexon-interlacing protein from Canis lupus familiaris (Dog).